Here is a 214-residue protein sequence, read N- to C-terminus: DELTA-actitoxin-Aeq1b (214 aa).

A signal peptide spans methionine 1 to alanine 19. The propeptide occupies leucine 20–arginine 35. Residues alanine 38–alanine 47 form a plays an important role in the hemolytic activity region. Residues glycine 46–serine 65 are N-terminal region. The phosphocholine site is built by serine 89, valine 122, serine 140, proline 142, tyrosine 168, tyrosine 172, and tyrosine 173. A trp-rich region, which is important for the binding to lipid membrane region spans residues serine 140–lysine 155. The short motif at arginine 179–aspartate 181 is the Cell attachment site, crucial for protein stability element.

The protein belongs to the actinoporin family. Sea anemone subfamily. Octamer or nonamer in membranes. Monomer in the soluble state.

The protein resides in the secreted. It is found in the nematocyst. Its subcellular location is the target cell membrane. In terms of biological role, pore-forming protein that forms cations-selective hydrophilic pores of around 1 nm and causes cytolysis. Pore formation is a multi-step process that involves specific recognition of membrane sphingomyelin (but neither cholesterol nor phosphatidylcholine) using aromatic rich region and adjacent phosphocholine (POC) binding site, firm binding to the membrane (mainly driven by hydrophobic interactions) accompanied by the transfer of the N-terminal region to the lipid-water interface and finally pore formation after oligomerization of monomers. The protein is DELTA-actitoxin-Aeq1b of Actinia equina (Beadlet anemone).